Here is a 398-residue protein sequence, read N- to C-terminus: 1-deoxy-D-xylulose 5-phosphate reductoisomerase (398 aa).

Residues Thr-28, Gly-29, Ser-30, Ile-31, Gly-54, Asn-57, and Asn-135 each coordinate NADPH. Position 136 (Lys-136) interacts with 1-deoxy-D-xylulose 5-phosphate. Glu-137 provides a ligand contact to NADPH. Asp-159 is a Mn(2+) binding site. 1-deoxy-D-xylulose 5-phosphate contacts are provided by Ser-160, Glu-161, Ser-185, and His-208. Glu-161 lines the Mn(2+) pocket. An NADPH-binding site is contributed by Gly-214. Residues Ser-221, Asn-226, Lys-227, and Glu-230 each coordinate 1-deoxy-D-xylulose 5-phosphate. Mn(2+) is bound at residue Glu-230.

It belongs to the DXR family. It depends on Mg(2+) as a cofactor. The cofactor is Mn(2+).

The enzyme catalyses 2-C-methyl-D-erythritol 4-phosphate + NADP(+) = 1-deoxy-D-xylulose 5-phosphate + NADPH + H(+). Its pathway is isoprenoid biosynthesis; isopentenyl diphosphate biosynthesis via DXP pathway; isopentenyl diphosphate from 1-deoxy-D-xylulose 5-phosphate: step 1/6. In terms of biological role, catalyzes the NADPH-dependent rearrangement and reduction of 1-deoxy-D-xylulose-5-phosphate (DXP) to 2-C-methyl-D-erythritol 4-phosphate (MEP). In Rhodococcus jostii (strain RHA1), this protein is 1-deoxy-D-xylulose 5-phosphate reductoisomerase.